The following is a 438-amino-acid chain: Aspartate--tRNA(Asp/Asn) ligase (438 aa).

An L-aspartate-binding site is contributed by glutamate 176. Residues 198–201 form an aspartate region; that stretch reads QLYK. Residue arginine 220 participates in L-aspartate binding. Residues 220–222, 228–230, and glutamate 361 contribute to the ATP site; these read RAE and RHL. The Mg(2+) site is built by glutamate 361 and serine 364. The L-aspartate site is built by serine 364 and arginine 368. 409–412 contributes to the ATP binding site; the sequence is GADR.

This sequence belongs to the class-II aminoacyl-tRNA synthetase family. Type 2 subfamily. As to quaternary structure, homodimer. Mg(2+) serves as cofactor.

The protein resides in the cytoplasm. It catalyses the reaction tRNA(Asx) + L-aspartate + ATP = L-aspartyl-tRNA(Asx) + AMP + diphosphate. Its function is as follows. Aspartyl-tRNA synthetase with relaxed tRNA specificity since it is able to aspartylate not only its cognate tRNA(Asp) but also tRNA(Asn). Reaction proceeds in two steps: L-aspartate is first activated by ATP to form Asp-AMP and then transferred to the acceptor end of tRNA(Asp/Asn). The protein is Aspartate--tRNA(Asp/Asn) ligase of Methanococcus maripaludis (strain DSM 14266 / JCM 13030 / NBRC 101832 / S2 / LL).